A 398-amino-acid polypeptide reads, in one-letter code: 4-hydroxy-3-methylbut-2-en-1-yl diphosphate synthase (ferredoxin) (398 aa).

Residues Cys-306, Cys-309, Cys-340, and Glu-347 each coordinate [4Fe-4S] cluster.

This sequence belongs to the IspG family. [4Fe-4S] cluster is required as a cofactor.

The enzyme catalyses (2E)-4-hydroxy-3-methylbut-2-enyl diphosphate + 2 oxidized [2Fe-2S]-[ferredoxin] + H2O = 2-C-methyl-D-erythritol 2,4-cyclic diphosphate + 2 reduced [2Fe-2S]-[ferredoxin] + H(+). It participates in isoprenoid biosynthesis; isopentenyl diphosphate biosynthesis via DXP pathway; isopentenyl diphosphate from 1-deoxy-D-xylulose 5-phosphate: step 5/6. In terms of biological role, converts 2C-methyl-D-erythritol 2,4-cyclodiphosphate (ME-2,4cPP) into 1-hydroxy-2-methyl-2-(E)-butenyl 4-diphosphate. This Synechococcus sp. (strain CC9605) protein is 4-hydroxy-3-methylbut-2-en-1-yl diphosphate synthase (ferredoxin).